The sequence spans 211 residues: Type II secretion system protein J (211 aa).

The propeptide at 1–7 (MRPRAAG) is leader sequence. N-methylphenylalanine is present on phenylalanine 8. The chain crosses the membrane as a helical span at residues 8-28 (FTLIEVLLATMLLVGGLALAF).

The protein belongs to the GSP J family.

It localises to the membrane. Functionally, involved in a type II secretion system (T2SS, formerly general secretion pathway, GSP) for the export of proteins. The sequence is that of Type II secretion system protein J (xpsJ) from Xanthomonas campestris pv. campestris (strain ATCC 33913 / DSM 3586 / NCPPB 528 / LMG 568 / P 25).